The following is a 426-amino-acid chain: Glutamate-1-semialdehyde 2,1-aminomutase (426 aa).

The residue at position 265 (Lys265) is an N6-(pyridoxal phosphate)lysine.

Belongs to the class-III pyridoxal-phosphate-dependent aminotransferase family. HemL subfamily. Homodimer. Pyridoxal 5'-phosphate serves as cofactor.

The protein resides in the cytoplasm. The enzyme catalyses (S)-4-amino-5-oxopentanoate = 5-aminolevulinate. The protein operates within porphyrin-containing compound metabolism; protoporphyrin-IX biosynthesis; 5-aminolevulinate from L-glutamyl-tRNA(Glu): step 2/2. The chain is Glutamate-1-semialdehyde 2,1-aminomutase from Salmonella enteritidis PT4 (strain P125109).